Consider the following 820-residue polypeptide: Serine/threonine-protein phosphatase 4 regulatory subunit 3-B (820 aa).

Residues 1-100 (MSDTRRRVKV…DEIWEKICQV (100 aa)) enclose the WH1 domain. Positions 682 to 694 (ELWFNEDDEEEGE) are enriched in acidic residues. Disordered stretches follow at residues 682–711 (ELWF…DFPE) and 750–820 (AANG…RLGS). Over residues 701 to 711 (EKTKPEDDFPE) the composition is skewed to basic and acidic residues. 2 stretches are compositionally biased toward polar residues: residues 750–761 (AANGANSTNSKS) and 768–790 (PATS…STKG). Residues 798–809 (YPDDEDEEEEED) show a composition bias toward acidic residues.

The protein belongs to the SMEK family. Serine/threonine-protein phosphatase 4 (PP4) occurs in different assemblies of the catalytic and one or more regulatory subunits.

In terms of biological role, regulatory subunit of serine/threonine-protein phosphatase 4 (PP4). The chain is Serine/threonine-protein phosphatase 4 regulatory subunit 3-B from Xenopus laevis (African clawed frog).